Consider the following 108-residue polypeptide: PTS system cellobiose-specific EIIB component (108 aa).

A PTS EIIB type-3 domain is found at 3-108 (DKVIALACAA…VLAAAENLMN (106 aa)). Cysteine 10 acts as the Phosphocysteine intermediate in catalysis. Cysteine 10 carries the phosphocysteine; by EIIA modification.

It carries out the reaction D-cellobiose(out) + N(pros)-phospho-L-histidyl-[protein] = 6-phospho-beta-D-glucosyl-(1-&gt;4)-D-glucose(in) + L-histidyl-[protein]. Its function is as follows. The phosphoenolpyruvate-dependent sugar phosphotransferase system (sugar PTS), a major carbohydrate active transport system, catalyzes the phosphorylation of incoming sugar substrates concomitantly with their translocation across the cell membrane. Involved in cellobiose transport with PtcA and CelB. This system can also transport lactose. The chain is PTS system cellobiose-specific EIIB component from Lactococcus lactis subsp. lactis (strain IL1403) (Streptococcus lactis).